The sequence spans 237 residues: Ribosomal RNA small subunit methyltransferase G (237 aa).

Residues G78, F83, 129–130, and R148 each bind S-adenosyl-L-methionine; that span reads AE. A disordered region spans residues 218-237; that stretch reads KKETPNKFPRKAGMPNKRPL.

This sequence belongs to the methyltransferase superfamily. RNA methyltransferase RsmG family.

Its subcellular location is the cytoplasm. In terms of biological role, specifically methylates the N7 position of a guanine in 16S rRNA. This is Ribosomal RNA small subunit methyltransferase G from Streptococcus suis (strain 98HAH33).